Here is an 83-residue protein sequence, read N- to C-terminus: Exodeoxyribonuclease 7 small subunit (83 aa).

Belongs to the XseB family. As to quaternary structure, heterooligomer composed of large and small subunits.

It localises to the cytoplasm. It catalyses the reaction Exonucleolytic cleavage in either 5'- to 3'- or 3'- to 5'-direction to yield nucleoside 5'-phosphates.. In terms of biological role, bidirectionally degrades single-stranded DNA into large acid-insoluble oligonucleotides, which are then degraded further into small acid-soluble oligonucleotides. The chain is Exodeoxyribonuclease 7 small subunit from Heliobacterium modesticaldum (strain ATCC 51547 / Ice1).